Here is a 398-residue protein sequence, read N- to C-terminus: Ubiquitin carboxyl-terminal hydrolase 17-like protein 6 (398 aa).

In terms of domain architecture, USP spans 80–375; it reads AGLQNMGNTC…QAYVLFYIQK (296 aa). Cysteine 89 (nucleophile) is an active-site residue. Catalysis depends on histidine 334, which acts as the Proton acceptor.

Belongs to the peptidase C19 family. USP17 subfamily.

The protein resides in the nucleus. Its subcellular location is the cytoplasm. It catalyses the reaction Thiol-dependent hydrolysis of ester, thioester, amide, peptide and isopeptide bonds formed by the C-terminal Gly of ubiquitin (a 76-residue protein attached to proteins as an intracellular targeting signal).. Its function is as follows. Deubiquitinating enzyme that removes conjugated ubiquitin from specific proteins to regulate different cellular processes that may include cell proliferation, progression through the cell cycle, cell migration, and the cellular response to viral infection. Seems to be non-functional in the regulation of apoptosis. The protein is Ubiquitin carboxyl-terminal hydrolase 17-like protein 6 (USP17L6P) of Homo sapiens (Human).